A 266-amino-acid polypeptide reads, in one-letter code: Uxu operon regulator (266 aa).

One can recognise an HTH gntR-type domain in the interval 23–91 (NRTYTRIGQL…KGSGVYVVRT (69 aa)). Residues 51–70 (EREISEKFGVSRTIVREAMV) constitute a DNA-binding region (H-T-H motif).

In terms of biological role, repressor for the uxuRBA operon. This is Uxu operon regulator (uxuR) from Haemophilus influenzae (strain ATCC 51907 / DSM 11121 / KW20 / Rd).